Consider the following 360-residue polypeptide: Phosphoserine aminotransferase (360 aa).

An L-glutamate-binding site is contributed by Arg41. Pyridoxal 5'-phosphate is bound by residues 75 to 76 (GR), Trp101, Thr152, Asp172, and Gln195. N6-(pyridoxal phosphate)lysine is present on Lys196. 237-238 (NT) contributes to the pyridoxal 5'-phosphate binding site.

Belongs to the class-V pyridoxal-phosphate-dependent aminotransferase family. SerC subfamily. As to quaternary structure, homodimer. Pyridoxal 5'-phosphate serves as cofactor.

It is found in the cytoplasm. It catalyses the reaction O-phospho-L-serine + 2-oxoglutarate = 3-phosphooxypyruvate + L-glutamate. It carries out the reaction 4-(phosphooxy)-L-threonine + 2-oxoglutarate = (R)-3-hydroxy-2-oxo-4-phosphooxybutanoate + L-glutamate. The protein operates within amino-acid biosynthesis; L-serine biosynthesis; L-serine from 3-phospho-D-glycerate: step 2/3. It participates in cofactor biosynthesis; pyridoxine 5'-phosphate biosynthesis; pyridoxine 5'-phosphate from D-erythrose 4-phosphate: step 3/5. Catalyzes the reversible conversion of 3-phosphohydroxypyruvate to phosphoserine and of 3-hydroxy-2-oxo-4-phosphonooxybutanoate to phosphohydroxythreonine. This is Phosphoserine aminotransferase from Pseudoalteromonas translucida (strain TAC 125).